We begin with the raw amino-acid sequence, 577 residues long: Acyl-coenzyme A synthetase ACSM2A, mitochondrial (577 aa).

The transit peptide at 1–46 (MHWLRKVQGLCTLWGTQMSSRTLYINSRQLVSLQWGHQEVPAKFNF) directs the protein to the mitochondrion. Glutamine 139 provides a ligand contact to CoA. Residues 221-229 (TSGTSGLPK), 359-364 (ESYGQT), aspartate 446, and arginine 461 each bind ATP. Threonine 364 provides a ligand contact to substrate. A CoA-binding site is contributed by 469 to 471 (SGY). Arginine 472 is a binding site for substrate. Arginine 501 is a CoA binding site. Residue serine 513 is modified to Phosphoserine. CoA contacts are provided by residues lysine 532 and 540–542 (YPR). Position 557 (lysine 557) interacts with ATP.

The protein belongs to the ATP-dependent AMP-binding enzyme family. Monomer. It depends on Mg(2+) as a cofactor. Mn(2+) serves as cofactor.

It is found in the mitochondrion. It catalyses the reaction a medium-chain fatty acid + ATP + CoA = a medium-chain fatty acyl-CoA + AMP + diphosphate. The enzyme catalyses benzoate + ATP + CoA = benzoyl-CoA + AMP + diphosphate. It carries out the reaction hexanoate + ATP + CoA = hexanoyl-CoA + AMP + diphosphate. The catalysed reaction is butanoate + ATP + CoA = butanoyl-CoA + AMP + diphosphate. It catalyses the reaction octanoate + ATP + CoA = octanoyl-CoA + AMP + diphosphate. The enzyme catalyses decanoate + ATP + CoA = decanoyl-CoA + AMP + diphosphate. In terms of biological role, catalyzes the activation of fatty acids by CoA to produce an acyl-CoA, the first step in fatty acid metabolism. Capable of activating medium-chain fatty acids (e.g. butyric (C4) to decanoic (C10) acids), and certain carboxylate-containing xenobiotics, e.g. benzoate. This is Acyl-coenzyme A synthetase ACSM2A, mitochondrial (ACSM2A) from Homo sapiens (Human).